We begin with the raw amino-acid sequence, 782 residues long: MDRVLSRADKERLLELLKLPRQLWGDFGRMQQAYKQQSLLLHPDKGGSHALMQELNSLWGTFKTEVYNLRMNLGGTGFQGSPPRTAERGTEESGHSPLHDDYWSFSYGSKYFTREWNDFFRKWDPSYQSPPKTAESSEQPDLFCYEEPLLSPNPSSPTDTPAHTAGRRRNPCVAEPDDSISPDPPRTPVSRKRPRPAGATGGGGGGVHANGGSVFGHPTGGTSTPAHPPPYHSQGGSESMGGSDSSGFAEGSFRSDPRCESENESYSQSCSQSSFNATPPKKAREDPAPSDFPSSLTGYLSHAIYSNKTFPAFLVYSTKEKCKQLYDTIGKFRPEFKCLVHYEEGGMLFFLTMTKHRVSAVKNYCSKLCSVSFLMCKAVTKPMECYQVVTAAPFQLITENKPGLHQFEFTDEPEEQKAVDWIMVADFALENNLDDPLLIMGYYLDFAKEVPSCIKCSKEETRLQIHWKNHRKHAENADLFLNCKAQKTICQQAADGVLASRRLKLVECTRSQLLKERLQQSLLRLKELGSSDALLYLAGVAWYQCLLEDFPQTLFKMLKLLTENVPKRRNILFRGPVNSGKTGLAAALISLLGGKSLNINCPADKLAFELGVAQDQFVVCFEDVKGQIALNKQLQPGMGVANLDNLRDYLDGSVKVNLEKKHSNKRSQLFPPCVCTMNEYLLPQTVWARFHMVLDFTCKPHLAQSLEKCEFLQRERIIQSGDTLALLLIWNFTSDVFDPDIQGLVKEVRDQFASECSYSLFCDILCNVQEGDDPLKDICEYS.

An N-acetylmethionine; by host modification is found at Met-1. The J domain occupies 12-75; the sequence is RLLELLKLPR…VYNLRMNLGG (64 aa). Disordered regions lie at residues 74-97 and 145-291; these read GGTG…GHSP and YEEP…APSD. The segment covering 85 to 97 has biased composition (basic and acidic residues); that stretch reads TAERGTEESGHSP. Residues 142-146 carry the LXCXE motif motif; the sequence is LFCYE. The span at 148-161 shows a compositional bias: low complexity; that stretch reads PLLSPNPSSPTDTP. Over residues 199 to 209 the composition is skewed to gly residues; that stretch reads ATGGGGGGVHA. Composition is skewed to low complexity over residues 233-247 and 264-274; these read SQGG…DSSG and ESYSQSCSQSS. At Thr-278 the chain carries Phosphothreonine; by host. The Nuclear localization signal signature appears at 279 to 286; it reads PPKKARED. The segment at residues 293-407 is a DNA-binding region (T-ag OBD); it reads PSSLTGYLSH…TENKPGLHQF (115 aa). A T-ag D1-type zinc finger spans residues 416-510; sequence QKAVDWIMVA…RRLKLVECTR (95 aa). Residues Cys-453, Cys-456, His-466, and His-470 each contribute to the Zn(2+) site. Positions 549-709 constitute an SF3 helicase domain; the sequence is DFPQTLFKML…PHLAQSLEKC (161 aa). 575–582 lines the ATP pocket; the sequence is GPVNSGKT.

As to quaternary structure, forms homohexamers in the presence of ATP. Interacts with host HDAC1. Interacts (via LXCXE domain) with host RB1; the interaction induces the aberrant dissociation of RB1-E2F1 complex thereby disrupting RB1's activity. Interacts (via LXCXE domain) with host pRB-related proteins RBL1 and RBL2. Interacts (via C-terminus) with host TOP1 and POLA1 allowing DNA replication. Interacts with host preinitiation complex components TBP, TFIIA and TFIID to regulate transcription initiation. Mg(2+) is required as a cofactor. Post-translationally, phosphorylated on both serine and threonine residues. Small t antigen inhibits the dephosphorylation by the AC form of PP2A. O-Glycosylated near the C-terminal region. In terms of processing, acetylated by CBP in a TP53-dependent manner.

It localises to the host nucleus. The catalysed reaction is Couples ATP hydrolysis with the unwinding of duplex DNA by translocating in the 3'-5' direction.. It carries out the reaction ATP + H2O = ADP + phosphate + H(+). Isoform large T antigen is a key early protein essential for both driving viral replication and inducing cellular transformation. Plays a role in viral genome replication by driving entry of quiescent cells into the cell cycle and by autoregulating the synthesis of viral early mRNA. Displays highly oncogenic activities by corrupting the host cellular checkpoint mechanisms that guard cell division and the transcription, replication, and repair of DNA. Participates in the modulation of cellular gene expression preceeding viral DNA replication. This step involves binding to host key cell cycle regulators retinoblastoma protein RB1/pRb and TP53. Induces the disassembly of host E2F1 transcription factors from RB1, thus promoting transcriptional activation of E2F1-regulated S-phase genes. Inhibits host TP53 binding to DNA, abrogating the ability of TP53 to stimulate gene expression. Plays the role of a TFIID-associated factor (TAF) in transcription initiation for all three RNA polymerases, by stabilizing the TBP-TFIIA complex on promoters. Initiates viral DNA replication and unwinding via interactions with the viral origin of replication. Binds two adjacent sites in the SV40 origin. The replication fork movement is facilitated by Large T antigen helicase activity. Has processive 3'-5' DNA helicase activity which requires a short 3' single-stranded region and ATP. Activates the transcription of viral late mRNA, through host TBP and TFIIA stabilization. Interferes with histone deacetylation mediated by HDAC1, leading to activation of transcription. The polypeptide is Large T antigen (Mus musculus (Mouse)).